Consider the following 186-residue polypeptide: Ribosome-recycling factor (186 aa).

Belongs to the RRF family.

The protein localises to the cytoplasm. Its function is as follows. Responsible for the release of ribosomes from messenger RNA at the termination of protein biosynthesis. May increase the efficiency of translation by recycling ribosomes from one round of translation to another. The chain is Ribosome-recycling factor from Polynucleobacter asymbioticus (strain DSM 18221 / CIP 109841 / QLW-P1DMWA-1) (Polynucleobacter necessarius subsp. asymbioticus).